The chain runs to 609 residues: UvrABC system protein C (609 aa).

Residues 13-91 form the GIY-YIG domain; it reads HEPGVYRMYD…IKLYQPRYNV (79 aa). The 36-residue stretch at 201–236 folds into the UVR domain; that stretch reads QQVLDYLIGKMEQASRNLDFEQAARYRDQIQAVRSV.

This sequence belongs to the UvrC family. Interacts with UvrB in an incision complex.

The protein resides in the cytoplasm. In terms of biological role, the UvrABC repair system catalyzes the recognition and processing of DNA lesions. UvrC both incises the 5' and 3' sides of the lesion. The N-terminal half is responsible for the 3' incision and the C-terminal half is responsible for the 5' incision. The polypeptide is UvrABC system protein C (Haemophilus influenzae (strain 86-028NP)).